The primary structure comprises 456 residues: NADH-quinone oxidoreductase subunit N (456 aa).

A run of 14 helical transmembrane segments spans residues 6–26 (LFAL…MLLA), 45–65 (VAAL…GALF), 75–95 (TAYA…AGVA), 97–117 (EAPA…GAGH), 118–138 (AATL…LFAF), 151–171 (FLVM…LIYA), 181–201 (WVGH…GLAF), 220–240 (PAGA…IAIL), 252–272 (LWSA…NVLA), 281–301 (MLGY…ASGA), 308–328 (VLFY…ASAM), 355–375 (GLLS…LYLF), 382–402 (ESWI…YYYI), and 426–446 (LLLI…LVLI).

The protein belongs to the complex I subunit 2 family. In terms of assembly, NDH-1 is composed of 14 different subunits. Subunits NuoA, H, J, K, L, M, N constitute the membrane sector of the complex.

It is found in the cell inner membrane. It carries out the reaction a quinone + NADH + 5 H(+)(in) = a quinol + NAD(+) + 4 H(+)(out). Its function is as follows. NDH-1 shuttles electrons from NADH, via FMN and iron-sulfur (Fe-S) centers, to quinones in the respiratory chain. The immediate electron acceptor for the enzyme in this species is believed to be ubiquinone. Couples the redox reaction to proton translocation (for every two electrons transferred, four hydrogen ions are translocated across the cytoplasmic membrane), and thus conserves the redox energy in a proton gradient. The sequence is that of NADH-quinone oxidoreductase subunit N from Rhodopseudomonas palustris (strain BisA53).